We begin with the raw amino-acid sequence, 261 residues long: Ribonuclease HII (261 aa).

One can recognise an RNase H type-2 domain in the interval 71 to 259; that stretch reads QYIAGVDEVG…VKEAKLHFES (189 aa). The a divalent metal cation site is built by D77, E78, and D169.

The protein belongs to the RNase HII family. Mn(2+) is required as a cofactor. The cofactor is Mg(2+).

The protein resides in the cytoplasm. It carries out the reaction Endonucleolytic cleavage to 5'-phosphomonoester.. Functionally, endonuclease that specifically degrades the RNA of RNA-DNA hybrids. In Listeria innocua serovar 6a (strain ATCC BAA-680 / CLIP 11262), this protein is Ribonuclease HII.